The chain runs to 597 residues: Scarecrow-like protein 5 (597 aa).

The interval 111–172 (ESSSGTKSHP…SPLSGSSATN (62 aa)) is disordered. The segment covering 123-169 (NNKNNSSSTTSFSSNESPISQANNNNLSRFNNHSPEENNNSPLSGSS) has biased composition (low complexity). The region spanning 218-597 (SMEMISRGDL…QPLITSCAWR (380 aa)) is the GRAS domain. The tract at residues 225–285 (GDLKGVLYEC…VARLASSGSS (61 aa)) is leucine repeat I (LRI). The tract at residues 304-369 (MHILYEACPY…GGPPNVRITG (66 aa)) is VHIID. Residues 335–339 (VHIID) carry the VHIID motif. Residues 385–417 (LVGQRLGKLAEMCGVPFEFHGAALCCTEVEIEK) are leucine repeat II (LRII). The segment at 426–520 (LAVNFPLVLH…QHCLAREVVN (95 aa)) is PFYRE. Residues 523-597 (ACEGVEREER…QPLITSCAWR (75 aa)) form an SAW region.

The protein belongs to the GRAS family. In terms of tissue distribution, expressed in seedlings, roots, shoots, leaves, flowers and siliques.

It is found in the nucleus. In terms of biological role, probable transcription factor involved in plant development. This is Scarecrow-like protein 5 (SCL5) from Arabidopsis thaliana (Mouse-ear cress).